Reading from the N-terminus, the 336-residue chain is F420-dependent glucose-6-phosphate dehydrogenase (336 aa).

Aspartate 39 serves as a coordination point for coenzyme F420-(gamma-Glu)n. Histidine 40 functions as the Proton donor in the catalytic mechanism. Coenzyme F420-(gamma-Glu)n is bound by residues threonine 76 and 107–108; that span reads TG. Glutamate 109 (proton acceptor) is an active-site residue. Coenzyme F420-(gamma-Glu)n is bound by residues asparagine 112, 177 to 178, and 180 to 181; these read GG and QV. Residues threonine 195, lysine 198, lysine 259, and arginine 283 each coordinate substrate.

This sequence belongs to the F420-dependent glucose-6-phosphate dehydrogenase family. In terms of assembly, homodimer.

The enzyme catalyses oxidized coenzyme F420-(gamma-L-Glu)(n) + D-glucose 6-phosphate + H(+) = 6-phospho-D-glucono-1,5-lactone + reduced coenzyme F420-(gamma-L-Glu)(n). Functionally, catalyzes the coenzyme F420-dependent oxidation of glucose 6-phosphate (G6P) to 6-phosphogluconolactone. Appears to have a role in resistance to oxidative stress, via its consumption of G6P that serves as a source of reducing power to combat oxidative stress in mycobacteria. The sequence is that of F420-dependent glucose-6-phosphate dehydrogenase from Mycolicibacterium gilvum (strain PYR-GCK) (Mycobacterium gilvum (strain PYR-GCK)).